Consider the following 480-residue polypeptide: Glutamyl-tRNA(Gln) amidotransferase subunit A (480 aa).

Catalysis depends on charge relay system residues Lys-74 and Ser-149. Ser-173 acts as the Acyl-ester intermediate in catalysis.

This sequence belongs to the amidase family. GatA subfamily. In terms of assembly, heterotrimer of A, B and C subunits.

It catalyses the reaction L-glutamyl-tRNA(Gln) + L-glutamine + ATP + H2O = L-glutaminyl-tRNA(Gln) + L-glutamate + ADP + phosphate + H(+). In terms of biological role, allows the formation of correctly charged Gln-tRNA(Gln) through the transamidation of misacylated Glu-tRNA(Gln) in organisms which lack glutaminyl-tRNA synthetase. The reaction takes place in the presence of glutamine and ATP through an activated gamma-phospho-Glu-tRNA(Gln). The protein is Glutamyl-tRNA(Gln) amidotransferase subunit A of Prochlorococcus marinus (strain MIT 9312).